The following is a 227-amino-acid chain: MKKRFSLIMMTGLLFGLTSPAFAAEKTETEAKAPANVAVLLDASGSMAKRIDGVSKFNSAKKEISKFASSLPEGTQVKMSVFGSEGNNKNSGKVQSCEAIRNVYGFQSFNEQSFLNSLNTIGPTGWTPIAKALNEAKSSFDQLDAKGEKVVYLLTDGEETCGGNPIKTAKELQKDNITVNVIGFDYKEGYKGQLNAIAKVGGGEYFPAYTQKDVEKIFTQQSLMLSK.

The N-terminal stretch at 1–23 is a signal peptide; that stretch reads MKKRFSLIMMTGLLFGLTSPAFA. Residues 36 to 227 form the VWFA domain; it reads NVAVLLDASG…FTQQSLMLSK (192 aa).

The protein to B.subtilis YwmD.

This is an uncharacterized protein from Bacillus subtilis (strain 168).